Consider the following 807-residue polypeptide: Protein FAR1-RELATED SEQUENCE 2 (807 aa).

The FAR1 domain occupies 52 to 138 (YFYREYARSV…VKEHNHEICP (87 aa)). Residues 219–315 (VVLFDTFYVR…CLWSVLSKIS (97 aa)) enclose the MULE domain. An SWIM-type zinc finger spans residues 499–535 (FFVALNNELLDACCSCHLFEYQGFLCKHAILVLQSAD). Residues 660–680 (EDATNRSEELRQETEQVSSRA) are a coiled coil. A compositionally biased stretch (polar residues) spans 788 to 798 (GSSQFQGSDSS). The tract at residues 788–807 (GSSQFQGSDSSHPSDHRLSN) is disordered.

This sequence belongs to the FHY3/FAR1 family. In terms of tissue distribution, expressed in hypocotyls, rosette and cauline leaves, inflorescences stems, flowers and siliques.

It is found in the nucleus. Functionally, putative transcription activator involved in regulating light control of development. This chain is Protein FAR1-RELATED SEQUENCE 2 (FRS2), found in Arabidopsis thaliana (Mouse-ear cress).